A 697-amino-acid polypeptide reads, in one-letter code: MFNKITKQIQFGRDTVTLETGQIARQATAAVMVRIGDTQVLVTVVGRKEANPGQNFFPLTVNYQEKTYATGRIPGGFLKREGRPSEKETLTCRLIDRPIRPLFPKGFMNEVQVVATVMSSDKNRDPDIAALIGTSAALSISGIPFSGPIGAARVGYKDGMYILNPSYSELAESALDLVVAGTEPAVLMVESEAQELSEDQMLGAVLFGHMEMQPLIQGIKEFAAEVGTETWDWKPAEQNETLKAAIKDKFAAALGEAYTITEKMARYAKVGELRDACVAEFATGEDGAPEADEVKDLFGKIEKSVVREAVVSGKPRIDGRALDAVRAIDCQVGTLAKTHGSALFTRGETQAIVTATLGGMRDAQFIDALEGSHQDHFMLQYNFPPYCVGETGFIGSPKRREIGHGRLARRGVEAVVPSVQDFPYTIRVVSEITESNGSSSMASVCGTSMALMDAGVPLTAPVAGIAMGLVKEEDGRYAVLSDILGDEDHLGDMDFKVAGTARGVTALQMDIKIEGITEEIMEKALNQANAGRLHILGEMNKAIAESRSEVSDNAPTLLTLKINPDKIRDVIGKGGATIRALTEETGCTIDIEDDGSVKIYGETREKADEAVRRVEEITAEAEVGAIYEGKVTRVVDFGAFVAIMPGTEGLLHISQIAEERVEKVTDYVNEGEIIKVKVLDVDQRGRIKLSMKEAKED.

Mg(2+) contacts are provided by D488 and D494. A KH domain is found at P555 to V614. Positions G624–K692 constitute an S1 motif domain.

This sequence belongs to the polyribonucleotide nucleotidyltransferase family. In terms of assembly, component of the RNA degradosome, which is a multiprotein complex involved in RNA processing and mRNA degradation. It depends on Mg(2+) as a cofactor.

Its subcellular location is the cytoplasm. The enzyme catalyses RNA(n+1) + phosphate = RNA(n) + a ribonucleoside 5'-diphosphate. Involved in mRNA degradation. Catalyzes the phosphorolysis of single-stranded polyribonucleotides processively in the 3'- to 5'-direction. The sequence is that of Polyribonucleotide nucleotidyltransferase from Alcanivorax borkumensis (strain ATCC 700651 / DSM 11573 / NCIMB 13689 / SK2).